Here is a 671-residue protein sequence, read N- to C-terminus: TBC1 domain family member 15 (671 aa).

N-acetylalanine is present on Ala-2. Phosphoserine occurs at positions 23, 32, 70, 205, and 257. One can recognise a Rab-GAP TBC domain in the interval 329–539 (GLSHSLRKQA…RLWEVMWTEL (211 aa)). A phosphoserine mark is found at Ser-623 and Ser-655. The disordered stretch occupies residues 650–671 (EAKDDSPTQTLASPNACRLTPA). Position 669 is a phosphothreonine (Thr-669).

In terms of assembly, interacts with non-phosphorylated form of RAB8A; phosphorylation of RAB8A at 'Thr-72' disrupts this interaction. Interacts with ARMC12. As to expression, ubiquitous, with highest expression in heart, liver and testis and lower expression in brain, spleen, lung, kidney and skeletal muscle.

The protein resides in the cytoplasm. Functionally, acts as a GTPase activating protein for RAB7A. Does not act on RAB4, RAB5 or RAB6. The sequence is that of TBC1 domain family member 15 (Tbc1d15) from Mus musculus (Mouse).